The following is a 122-amino-acid chain: Large ribosomal subunit protein uL18 (122 aa).

A disordered region spans residues 1 to 26 (MSNLSRKQQTQKRHRRLRRHLKGTAQ). Basic residues predominate over residues 9-22 (QTQKRHRRLRRHLK).

This sequence belongs to the universal ribosomal protein uL18 family. As to quaternary structure, part of the 50S ribosomal subunit; part of the 5S rRNA/L5/L18/L25 subcomplex. Contacts the 5S and 23S rRNAs.

This is one of the proteins that bind and probably mediate the attachment of the 5S RNA into the large ribosomal subunit, where it forms part of the central protuberance. This Prochlorococcus marinus (strain MIT 9313) protein is Large ribosomal subunit protein uL18.